Consider the following 62-residue polypeptide: Photosystem II reaction center protein Z (62 aa).

The next 2 membrane-spanning stretches (helical) occupy residues 8 to 28 (LVFI…VTFA) and 41 to 61 (YTGA…NSFI).

It belongs to the PsbZ family. In terms of assembly, PSII is composed of 1 copy each of membrane proteins PsbA, PsbB, PsbC, PsbD, PsbE, PsbF, PsbH, PsbI, PsbJ, PsbK, PsbL, PsbM, PsbT, sbX, PsbY, PsbZ, Psb30/Ycf12, at least 3 peripheral proteins of the oxygen-evolving complex and a large number of cofactors. It forms dimeric complexes.

It localises to the plastid. The protein resides in the chloroplast thylakoid membrane. Its function is as follows. May control the interaction of photosystem II (PSII) cores with the light-harvesting antenna, regulates electron flow through the 2 photosystem reaction centers. PSII is a light-driven water plastoquinone oxidoreductase, using light energy to abstract electrons from H(2)O, generating a proton gradient subsequently used for ATP formation. The sequence is that of Photosystem II reaction center protein Z from Gracilaria tenuistipitata var. liui (Red alga).